We begin with the raw amino-acid sequence, 426 residues long: Methylamine dehydrogenase heavy chain (426 aa).

The signal sequence occupies residues 1 to 31 (MASARESTPRYLTLIGATLACSALALGAAQA). The segment at 32–64 (QTEPAEPEAPAETAAADAAGQTEGQRGAAEAAA) is disordered. Cys-221 and Cys-236 form a disulfide bridge.

The protein belongs to the aromatic amine dehydrogenase heavy chain family. In terms of assembly, tetramer of two light and two heavy chains.

It localises to the periplasm. It carries out the reaction 2 oxidized [amicyanin] + methylamine + H2O = 2 reduced [amicyanin] + formaldehyde + NH4(+) + 2 H(+). In terms of biological role, methylamine dehydrogenase carries out the oxidation of methylamine. Electrons are passed from methylamine dehydrogenase to amicyanin. This chain is Methylamine dehydrogenase heavy chain (mauB), found in Paracoccus versutus (Thiobacillus versutus).